We begin with the raw amino-acid sequence, 172 residues long: Putative methyltransferase Mtx subunit A (172 aa).

It belongs to the MtrA family. In terms of assembly, may be part of a complex composed of 3 subunits; MtxA, MtxH and MtxX.

This chain is Putative methyltransferase Mtx subunit A (mtxA), found in Methanosarcina mazei (strain ATCC BAA-159 / DSM 3647 / Goe1 / Go1 / JCM 11833 / OCM 88) (Methanosarcina frisia).